A 685-amino-acid polypeptide reads, in one-letter code: Sorbicillinoid biosynthetic cluster transcription factor sor4 (685 aa).

The span at 1–14 (MGSSATATTTGEST) shows a compositional bias: low complexity. The disordered stretch occupies residues 1 to 20 (MGSSATATTTGESTRQQPGL). The zn(2)-C6 fungal-type DNA-binding region spans 22–49 (CEECRRRKARCDRVRPKCGICADSGRNC). Residues 81-112 (GQNDAPSLPQERDSLGCPTPSEKVSPEGDLVS) form a disordered region.

It is found in the nucleus. Functionally, transcription factor that acts as the main regulator of the gene cluster that mediates the biosynthesis of sorbicillinoids, a diverse group of yellow secondary metabolites that restrict growth of competing pathogenic fungi but not of bacteria. This Hypocrea jecorina (strain QM6a) (Trichoderma reesei) protein is Sorbicillinoid biosynthetic cluster transcription factor sor4.